The sequence spans 328 residues: Gonadotropin-releasing hormone receptor (328 aa).

Residues 1–38 (MANSDSPEQNENHCSAINSSIPLTPGSLPTLTLSGKIR) are Extracellular-facing. Residue N18 is glycosylated (N-linked (GlcNAc...) asparagine). A helical transmembrane segment spans residues 39–58 (VTVTFFLFLLSTIFNTSFLL). Residues 59-77 (KLQNWTQRKEKRKKLSRMK) lie on the Cytoplasmic side of the membrane. A helical transmembrane segment spans residues 78-97 (LLLKHLTLANLLETLIVMPL). The Extracellular portion of the chain corresponds to 98–115 (DGMWNITVQWYAGELLCK). The N-linked (GlcNAc...) asparagine glycan is linked to N102. Cysteines 114 and 196 form a disulfide. The helical transmembrane segment at 116–137 (VLSYLKLFSMYAPAFMMVVISL) threads the bilayer. Topologically, residues 138-164 (DRSLAITKPLAVKSNSKLGQFMIGLAW) are cytoplasmic. A helical transmembrane segment spans residues 165 to 184 (LLSSIFAGPQLYIFGMIHLA). The Extracellular portion of the chain corresponds to 185–212 (DDSGQTEGFSQCVTHCSFPQWWHQAFYN). A helical transmembrane segment spans residues 213–232 (FFTFSCLFIIPLLIMVICNA). Topologically, residues 233-281 (KIIFTLTRVLHQDPHKLQLNQSKNNIPRARLRTLKMTVAFATSFTVCWT) are cytoplasmic. A helical transmembrane segment spans residues 282–300 (PYYVLGIWYWFDPDMVNRV). At 301 to 306 (SDPVNH) the chain is on the extracellular side. The chain crosses the membrane as a helical span at residues 307–326 (FFFLFAFLNPCFDPLIYGYF). Residues 327–328 (SL) are Cytoplasmic-facing.

This sequence belongs to the G-protein coupled receptor 1 family.

It localises to the cell membrane. In terms of biological role, receptor for gonadotropin releasing hormone (GnRH) that mediates the action of GnRH to stimulate the secretion of the gonadotropic hormones luteinizing hormone (LH) and follicle-stimulating hormone (FSH). This receptor mediates its action by association with G-proteins that activate a phosphatidylinositol-calcium second messenger system. This Bos taurus (Bovine) protein is Gonadotropin-releasing hormone receptor (GNRHR).